The chain runs to 84 residues: Small ribosomal subunit protein uS17 (84 aa).

Belongs to the universal ribosomal protein uS17 family. As to quaternary structure, part of the 30S ribosomal subunit.

Functionally, one of the primary rRNA binding proteins, it binds specifically to the 5'-end of 16S ribosomal RNA. The sequence is that of Small ribosomal subunit protein uS17 from Clostridium kluyveri (strain NBRC 12016).